Consider the following 421-residue polypeptide: Elsinochrome C biosynthesis regulatory protein elcR (421 aa).

Residues methionine 1–glycine 16 are compositionally biased toward polar residues. Residues methionine 1–arginine 20 are disordered. A DNA-binding region (zn(2)-C6 fungal-type) is located at residues cysteine 27 to cysteine 54.

The protein resides in the nucleus. Its function is as follows. Transcription regulator of the gene cluster that mediates the biosynthesis of elsinochrome C, a perelyenequinone phytotoxin structurally similar to cercosporin. The sequence is that of Elsinochrome C biosynthesis regulatory protein elcR from Phaeosphaeria nodorum (strain SN15 / ATCC MYA-4574 / FGSC 10173) (Glume blotch fungus).